A 159-amino-acid chain; its full sequence is Eukaryotic translation initiation factor 5A-1 (159 aa).

A compositionally biased stretch (basic and acidic residues) spans 1–12 (MSDEEHHFESKA). The interval 1–23 (MSDEEHHFESKADAGASKTYPQQ) is disordered. Lysine 52 carries the hypusine modification.

This sequence belongs to the eIF-5A family. Lys-52 undergoes hypusination, a unique post-translational modification that consists in the addition of a butylamino group from spermidine to lysine side chain, leading to the formation of the unusual amino acid hypusine. eIF-5As are the only known proteins to undergo this modification, which is essential for their function.

Its function is as follows. Translation factor that promotes translation elongation and termination, particularly upon ribosome stalling at specific amino acid sequence contexts. Binds between the exit (E) and peptidyl (P) site of the ribosome and promotes rescue of stalled ribosome: specifically required for efficient translation of polyproline-containing peptides as well as other motifs that stall the ribosome. Acts as a ribosome quality control (RQC) cofactor by joining the RQC complex to facilitate peptidyl transfer during CAT tailing step. The protein is Eukaryotic translation initiation factor 5A-1 of Solanum lycopersicum (Tomato).